A 497-amino-acid polypeptide reads, in one-letter code: MDATTGPVHYHKLQLWEPGVESEEEEEEEEEEIAEPLVLSLRRLQNTPRNEVGGLPGAWARLLAGLLLLAVSSSLALRQLHSRDSPRGNLGSVAPPASRHSHRPGVYHHSAIISPAATCSQLGQELLVAGGNVVDAGVGAALCLAVVHPHATGLGATFWGLFYNSSSGNSTALTAGPTQLLAPGLGLPTGLPALHLLHAHFGRLPWPHLLTKPAMLAEKGFEVDAPLANALAIQGTKGLCPLFCHTNGTPLGLGARATNPNLAAVLRSAALASSPDLAGKALLNPLVRDLGLELPSAQPVPSLEPALQLLLPRGVLFTTPGPSAGPELVELLESTLHSRTPSSAPCPPFLQTAETPVSSALATVDSNGSMLLLISSINSSFGSGHLSPSTGVLLSNLEASPAPSAWACPLILRDNLDDTEADMLGMVASGISRGAKAMTCTLLNHLATPQIPQQPQHQRPTESPGICGQGALLQAVVHAEHAHVSSVPSGCCPFQGY.

The segment at 1–34 (MDATTGPVHYHKLQLWEPGVESEEEEEEEEEEIA) is disordered. Residues 1 to 51 (MDATTGPVHYHKLQLWEPGVESEEEEEEEEEEIAEPLVLSLRRLQNTPRNE) are Cytoplasmic-facing. A compositionally biased stretch (acidic residues) spans 20–34 (VESEEEEEEEEEEIA). A helical; Signal-anchor for type II membrane protein transmembrane segment spans residues 52–72 (VGGLPGAWARLLAGLLLLAVS). Over 73–497 (SSLALRQLHS…PSGCCPFQGY (425 aa)) the chain is Extracellular. 4 N-linked (GlcNAc...) asparagine glycosylation sites follow: asparagine 164, asparagine 169, asparagine 367, and asparagine 378.

Belongs to the gamma-glutamyltransferase family. Heterodimer composed of the light and heavy chains. The active site is located in the light chain. Post-translationally, cleaved by autocatalysis into a large and a small subunit and the autocatalytic cleavage is essential to the functional activation of the enzyme.

The protein resides in the membrane. The catalysed reaction is an N-terminal (5-L-glutamyl)-[peptide] + an alpha-amino acid = 5-L-glutamyl amino acid + an N-terminal L-alpha-aminoacyl-[peptide]. It carries out the reaction glutathione + H2O = L-cysteinylglycine + L-glutamate. It catalyses the reaction an S-substituted glutathione + H2O = an S-substituted L-cysteinylglycine + L-glutamate. Its pathway is sulfur metabolism; glutathione metabolism. Hydrolyzes and transfers gamma-glutamyl moieties from glutathione and other gamma-glutamyl compounds to acceptors. In Mus musculus (Mouse), this protein is Glutathione hydrolase 6.